The following is a 419-amino-acid chain: Endochitinase 2 (419 aa).

A signal peptide spans 1–18; the sequence is MHHLRALVGVGLAGLAAG. Residues 35–343 enclose the GH18 domain; it reads AQNVVYWGQN…QQAKSILVNG (309 aa). Asparagine 153 is a glycosylation site (N-linked (GlcNAc...) asparagine). Glutamate 173 acts as the Proton donor in catalysis. Residues asparagine 237 and asparagine 256 are each glycosylated (N-linked (GlcNAc...) asparagine). Residues 350-381 show a composition bias toward low complexity; that stretch reads GPPSSTPATAPAPTATTMPSSTSVSSPAASPT. The interval 350–386 is disordered; sequence GPPSSTPATAPAPTATTMPSSTSVSSPAASPTGGTVP. One can recognise a CBM1 domain in the interval 383 to 419; sequence GTVPQWGQCGGEGYSGPTQCVAPYQCVKQGDWWSSCR.

Belongs to the glycosyl hydrolase 18 family. Chitinase class III subfamily.

The protein resides in the secreted. The catalysed reaction is Random endo-hydrolysis of N-acetyl-beta-D-glucosaminide (1-&gt;4)-beta-linkages in chitin and chitodextrins.. In terms of biological role, secreted chitinase involved in the degradation of chitin, a component of the cell walls of fungi and exoskeletal elements of some animals (including worms and arthropods). Participates in the infection process and directly acts in the penetration process of the host cuticle. The polypeptide is Endochitinase 2 (chi2) (Metarhizium robertsii (strain ARSEF 23 / ATCC MYA-3075) (Metarhizium anisopliae (strain ARSEF 23))).